Reading from the N-terminus, the 309-residue chain is Homoserine O-succinyltransferase (309 aa).

Cys-142 (acyl-thioester intermediate) is an active-site residue. The substrate site is built by Lys-163 and Ser-192. His-235 serves as the catalytic Proton acceptor. Glu-237 is a catalytic residue. A substrate-binding site is contributed by Arg-249.

This sequence belongs to the MetA family. As to quaternary structure, homodimer.

Its subcellular location is the cytoplasm. It catalyses the reaction L-homoserine + succinyl-CoA = O-succinyl-L-homoserine + CoA. It functions in the pathway amino-acid biosynthesis; L-methionine biosynthesis via de novo pathway; O-succinyl-L-homoserine from L-homoserine: step 1/1. Transfers a succinyl group from succinyl-CoA to L-homoserine, forming succinyl-L-homoserine. This Salmonella gallinarum (strain 287/91 / NCTC 13346) protein is Homoserine O-succinyltransferase.